Here is a 560-residue protein sequence, read N- to C-terminus: Oxygen-dependent choline dehydrogenase (560 aa).

Residue 6 to 35 participates in FAD binding; the sequence is DYIIVGAGSAGCVLADRLSESGDHSVLLLE. H470 functions as the Proton acceptor in the catalytic mechanism.

It belongs to the GMC oxidoreductase family. FAD serves as cofactor.

It catalyses the reaction choline + A = betaine aldehyde + AH2. The enzyme catalyses betaine aldehyde + NAD(+) + H2O = glycine betaine + NADH + 2 H(+). Its pathway is amine and polyamine biosynthesis; betaine biosynthesis via choline pathway; betaine aldehyde from choline (cytochrome c reductase route): step 1/1. In terms of biological role, involved in the biosynthesis of the osmoprotectant glycine betaine. Catalyzes the oxidation of choline to betaine aldehyde and betaine aldehyde to glycine betaine at the same rate. The sequence is that of Oxygen-dependent choline dehydrogenase from Vibrio vulnificus (strain YJ016).